Here is a 532-residue protein sequence, read N- to C-terminus: Growth factor receptor-bound protein 7 (532 aa).

The span at M1–A20 shows a compositional bias: low complexity. Positions M1–R96 are disordered. Residues P21–P34 are compositionally biased toward pro residues. The 87-residue stretch at R100–A186 folds into the Ras-associating domain. Phosphotyrosine; by FAK1 occurs at positions 188 and 338. Positions F229–Y338 constitute a PH domain. S361 is modified (phosphoserine). Positions W431–C527 constitute an SH2 domain.

It belongs to the GRB7/10/14 family. As to quaternary structure, homodimer. Interacts (via SH2 domain) with EGFR, ERBB2, ERBB3 (when phosphorylated), ERBB4 (when phosphorylated), EPHB1, INSR, FGFR1, PDGFRA (tyrosine phosphorylated) and PDGFRB (tyrosine phosphorylated). Interacts with SHC1. Interacts with RND1. Interacts (when tyrosine phosphorylated) with FHL2 and HAX1. Interacts (via SH2 domain) with RET and PTK2/FAK1. Interacts (when not phosphorylated) with ELAVL1. In stressed cells, but not in normal cells, part of a complex that contains at least GRB7, PTK2/FAK1, STAU1, ELAVL1 and TIA1. Interacts (via SH2 domain) with KIT (phosphorylated). Interacts (via SH2 domain) with TEK/TIE2 (tyrosine phosphorylated). Phosphorylated on serine and threonine residues in response to heregulin. Phosphorylated on tyrosine residues by TEK/TIE2. Phosphorylated on tyrosine residues in response to NTN1 signaling. Phosphorylation promotes stress granule disassembly during recovery after cellular stress. Phosphorylated on tyrosine residues by PTK2/FAK1, and possibly also other kinases. Phosphorylation is enhanced by activation of receptor kinases. Tyrosine phosphorylation is essential for activation of down-stream protein kinases.

Its subcellular location is the cytoplasm. It is found in the cell junction. It localises to the focal adhesion. The protein localises to the cell membrane. The protein resides in the cytoplasmic granule. Its subcellular location is the cell projection. Functionally, adapter protein that interacts with the cytoplasmic domain of numerous receptor kinases and modulates down-stream signaling. Promotes activation of down-stream protein kinases, including STAT3, AKT1, MAPK1 and/or MAPK3. Promotes activation of HRAS. Plays a role in signal transduction in response to EGF. Plays a role in the regulation of cell proliferation and cell migration. Plays a role in the assembly and stability of RNA stress granules. Binds to the 5'UTR of target mRNA molecules and represses translation of target mRNA species, when not phosphorylated. Phosphorylation impairs RNA binding and promotes stress granule disassembly during recovery after cellular stress. The sequence is that of Growth factor receptor-bound protein 7 (GRB7) from Homo sapiens (Human).